Here is a 396-residue protein sequence, read N- to C-terminus: Phosphoglycerate kinase (396 aa).

Substrate-binding positions include 23–25 (DFN), Arg38, 61–64 (HMGK), Arg122, and Arg155. ATP contacts are provided by residues Lys206, Gly296, Glu327, and 353–356 (GGDS).

Belongs to the phosphoglycerate kinase family. In terms of assembly, monomer.

The protein resides in the cytoplasm. The catalysed reaction is (2R)-3-phosphoglycerate + ATP = (2R)-3-phospho-glyceroyl phosphate + ADP. The protein operates within carbohydrate degradation; glycolysis; pyruvate from D-glyceraldehyde 3-phosphate: step 2/5. This chain is Phosphoglycerate kinase, found in Clostridium botulinum (strain Eklund 17B / Type B).